The following is a 173-amino-acid chain: ATP synthase subunit b (173 aa).

A helical membrane pass occupies residues 12–34 (AFGNLYAIGWSAVNFLVLLALMY).

The protein belongs to the ATPase B chain family. F-type ATPases have 2 components, F(1) - the catalytic core - and F(0) - the membrane proton channel. F(1) has five subunits: alpha(3), beta(3), gamma(1), delta(1), epsilon(1). F(0) has three main subunits: a(1), b(2) and c(10-14). The alpha and beta chains form an alternating ring which encloses part of the gamma chain. F(1) is attached to F(0) by a central stalk formed by the gamma and epsilon chains, while a peripheral stalk is formed by the delta and b chains.

The protein localises to the cell membrane. In terms of biological role, f(1)F(0) ATP synthase produces ATP from ADP in the presence of a proton or sodium gradient. F-type ATPases consist of two structural domains, F(1) containing the extramembraneous catalytic core and F(0) containing the membrane proton channel, linked together by a central stalk and a peripheral stalk. During catalysis, ATP synthesis in the catalytic domain of F(1) is coupled via a rotary mechanism of the central stalk subunits to proton translocation. Functionally, component of the F(0) channel, it forms part of the peripheral stalk, linking F(1) to F(0). In Syntrophomonas wolfei subsp. wolfei (strain DSM 2245B / Goettingen), this protein is ATP synthase subunit b.